The primary structure comprises 395 residues: RNA ligase 1 (395 aa).

3 residues coordinate ATP: Tyr48, Arg65, and Lys83. Catalysis depends on Lys113, which acts as the N6-AMP-lysine intermediate. ATP is bound by residues Glu173, Lys255, and Lys257. Asp285 provides a ligand contact to Mg(2+).

The cofactor is Mg(2+). Requires Mn(2+) as cofactor.

It catalyses the reaction ATP + (ribonucleotide)n-3'-hydroxyl + 5'-phospho-(ribonucleotide)m = (ribonucleotide)n+m + AMP + diphosphate.. RNA ligase that ligates single-stranded nucleic acids in an ATP-dependent manner. Catalyzes both inter- and intra-molecular single-stranded DNA (ssDNA) ligation to &gt;50% completion in a matter of hours at an elevated temperature, although favoring intra-molecular ligation on RNA and single-stranded DNA substrates. Is able to catalyze the adenylation reaction of ssDNA 3'-terminal phosphate (ssDNA 3'p) to 3'-adenylated DNA (ssDNA 3'pp5'A). Does not have significant 3'-adenylation activity with a 3'-phosphorylated nicked dsDNA substrate. This Thermus scotoductus protein is RNA ligase 1.